Here is a 180-residue protein sequence, read N- to C-terminus: Large ribosomal subunit protein uL5 (180 aa).

Belongs to the universal ribosomal protein uL5 family. As to quaternary structure, part of the 50S ribosomal subunit; part of the 5S rRNA/L5/L18/L25 subcomplex. Contacts the 5S rRNA and the P site tRNA. Forms a bridge to the 30S subunit in the 70S ribosome.

This is one of the proteins that bind and probably mediate the attachment of the 5S RNA into the large ribosomal subunit, where it forms part of the central protuberance. In the 70S ribosome it contacts protein S13 of the 30S subunit (bridge B1b), connecting the 2 subunits; this bridge is implicated in subunit movement. Contacts the P site tRNA; the 5S rRNA and some of its associated proteins might help stabilize positioning of ribosome-bound tRNAs. The polypeptide is Large ribosomal subunit protein uL5 (Chlamydia caviae (strain ATCC VR-813 / DSM 19441 / 03DC25 / GPIC) (Chlamydophila caviae)).